The chain runs to 179 residues: Large ribosomal subunit protein uL5 (179 aa).

The protein belongs to the universal ribosomal protein uL5 family. In terms of assembly, part of the 50S ribosomal subunit; part of the 5S rRNA/L5/L18/L25 subcomplex. Contacts the 5S rRNA and the P site tRNA. Forms a bridge to the 30S subunit in the 70S ribosome.

Its function is as follows. This is one of the proteins that bind and probably mediate the attachment of the 5S RNA into the large ribosomal subunit, where it forms part of the central protuberance. In the 70S ribosome it contacts protein S13 of the 30S subunit (bridge B1b), connecting the 2 subunits; this bridge is implicated in subunit movement. Contacts the P site tRNA; the 5S rRNA and some of its associated proteins might help stabilize positioning of ribosome-bound tRNAs. The chain is Large ribosomal subunit protein uL5 from Prochlorococcus marinus (strain SARG / CCMP1375 / SS120).